The chain runs to 328 residues: MDLKKCLDMAEAAKAGQLPEISDLEELACLPEQHVLDLLPAANAVRKHFFGDQVHLCCIVNGKSGKCREDCAFCAQSAYAKTSAPVYPLIDSEKMFQGASYARENGVHRYSLVASGGRLPKAEVRMVAEAFSRMGGDGVGYCASLGILDAQDFALLKEAGVDRYHHNLETAESHFKEICTTHAYGDRVKTIREAKKAGMSVCAGGLFGIGESDLQVLELGLALRDLEVDSVPVNFLIPIKGTRLEKSSDLSPLRCLKIISLLRFALGGKEIVICGGRESNLEELHPLVFYAGASGIMTGDYLTAPGRNPQKDHAMIRRLGLTALREGE.

The Radical SAM core domain occupies 50-277 (FGDQVHLCCI…GKEIVICGGR (228 aa)). The [4Fe-4S] cluster site is built by C67, C71, and C74. The [2Fe-2S] cluster site is built by S111, C142, and C202.

It belongs to the radical SAM superfamily. Biotin synthase family. Homodimer. [4Fe-4S] cluster is required as a cofactor. Requires [2Fe-2S] cluster as cofactor.

It catalyses the reaction (4R,5S)-dethiobiotin + (sulfur carrier)-SH + 2 reduced [2Fe-2S]-[ferredoxin] + 2 S-adenosyl-L-methionine = (sulfur carrier)-H + biotin + 2 5'-deoxyadenosine + 2 L-methionine + 2 oxidized [2Fe-2S]-[ferredoxin]. Its pathway is cofactor biosynthesis; biotin biosynthesis; biotin from 7,8-diaminononanoate: step 2/2. In terms of biological role, catalyzes the conversion of dethiobiotin (DTB) to biotin by the insertion of a sulfur atom into dethiobiotin via a radical-based mechanism. The sequence is that of Biotin synthase from Desulfatibacillum aliphaticivorans.